A 147-amino-acid chain; its full sequence is Large ribosomal subunit protein uL15 (147 aa).

Residues 1–45 (MTIKLHHLRPAPGAKSDKIRVGRGEGGKRGKTAGRGTKGTKARKN) are disordered. A compositionally biased stretch (basic and acidic residues) spans 15 to 28 (KSDKIRVGRGEGGK).

It belongs to the universal ribosomal protein uL15 family. Part of the 50S ribosomal subunit.

Its function is as follows. Binds to the 23S rRNA. The protein is Large ribosomal subunit protein uL15 of Rhodococcus jostii (strain RHA1).